A 155-amino-acid chain; its full sequence is Ribonuclease H (155 aa).

The region spanning 4-145 (QQKVVEIYTD…ADALARKAIT (142 aa)) is the RNase H type-1 domain. Mg(2+)-binding residues include Asp13, Glu51, Asp73, and Asp137.

This sequence belongs to the RNase H family. Monomer. Requires Mg(2+) as cofactor.

It is found in the cytoplasm. It carries out the reaction Endonucleolytic cleavage to 5'-phosphomonoester.. In terms of biological role, endonuclease that specifically degrades the RNA of RNA-DNA hybrids. In Bartonella quintana (strain Toulouse) (Rochalimaea quintana), this protein is Ribonuclease H.